The chain runs to 63 residues: Protein DsrB (63 aa).

It belongs to the DsrB family.

In Yersinia enterocolitica serotype O:8 / biotype 1B (strain NCTC 13174 / 8081), this protein is Protein DsrB.